The chain runs to 783 residues: Cyclic di-GMP phosphodiesterase NbdA (783 aa).

One can recognise an MHYT domain in the interval 81-274 (YSPSLVALAF…FTGMAALVLS (194 aa)). The next 7 membrane-spanning stretches (helical) occupy residues 84–104 (SLVA…LDMV), 120–140 (IGAF…MLAF), 150–170 (LPIT…TMYM), 176–196 (FGLL…AAMH), 215–235 (LFAL…AAVP), 255–275 (LLAG…VLSV), and 292–312 (LGWL…WAAW). Residues 313–783 (SEKQRERRLS…APPLRSLNQA (471 aa)) lie on the Cytoplasmic side of the membrane. Residues 375-507 (KGLAVMFLDL…GRNNAQFFSR (133 aa)) enclose the GGDEF domain. Residues 516-770 (ELQMEEELRQ…ALEEFLRAYR (255 aa)) enclose the EAL domain. 3',3'-c-di-GMP contacts are provided by Gln-537, Glu-551, Arg-555, Asn-610, and Asn-615. Glu-551 contacts Mg(2+). Asn-610 serves as a coordination point for Mg(2+). Mg(2+) is bound by residues Glu-642, Asp-672, and Asp-673. A 3',3'-c-di-GMP-binding site is contributed by Asp-672. Arg-696 contacts 3',3'-c-di-GMP. Glu-729 is a Mg(2+) binding site. The 3',3'-c-di-GMP site is built by Glu-732 and Tyr-751.

The cofactor is Mg(2+).

It localises to the cell inner membrane. The enzyme catalyses 3',3'-c-di-GMP + H2O = 5'-phosphoguanylyl(3'-&gt;5')guanosine + H(+). Its activity is regulated as follows. PDE activity is stimulated by GTP. It could also be stimulated by NO. Displays c-di-GMP-specific phosphodiesterase (PDE) activity. Seems to play a specific role in nitric oxide (NO)-induced biofilm dispersion. Enhanced NbdA synthesis in the presence of NO increases PDE activity, leading to reduced cellular c-di-GMP levels and biofilm dispersion. Does not show diguanylate cyclase (DGC) activity. The sequence is that of Cyclic di-GMP phosphodiesterase NbdA from Pseudomonas aeruginosa (strain ATCC 15692 / DSM 22644 / CIP 104116 / JCM 14847 / LMG 12228 / 1C / PRS 101 / PAO1).